We begin with the raw amino-acid sequence, 156 residues long: Envelope glycoprotein L (156 aa).

Positions 1 to 16 (MSPLVAVLVFFSAALG) are cleaved as a signal peptide. An interaction with gH region spans residues 21-141 (GVAGNPHGLD…KELGEVAVHK (121 aa)). A gL alphaherpesvirus-type domain is found at 50-156 (ELEWDDEDHP…LRYNGGPPAE (107 aa)). An intrachain disulfide couples cysteine 71 to cysteine 95.

It belongs to the herpesviridae glycoprotein L (gL) family. Alphaherpesvirinae gL subfamily. Interacts with glycoprotein H (gH); this interaction is necessary for the correct processing and cell surface expression of gH. The heterodimer gH/gL seems to interact with gB trimers during fusion. O-glycosylated, and sialylated.

The protein resides in the virion membrane. It localises to the host cell membrane. It is found in the host Golgi apparatus. Its subcellular location is the host trans-Golgi network. Functionally, the heterodimer glycoprotein H-glycoprotein L is required for the fusion of viral and plasma membranes leading to virus entry into the host cell. Acts as a functional inhibitor of gH and maintains gH in an inhibited form. Upon binding to host integrins, gL dissociates from gH leading to activation of the viral fusion glycoproteins gB and gH. The polypeptide is Envelope glycoprotein L (Sus scrofa (Pig)).